The chain runs to 667 residues: Glycine--tRNA ligase beta subunit (667 aa).

This sequence belongs to the class-II aminoacyl-tRNA synthetase family. In terms of assembly, tetramer of two alpha and two beta subunits.

The protein resides in the cytoplasm. It catalyses the reaction tRNA(Gly) + glycine + ATP = glycyl-tRNA(Gly) + AMP + diphosphate. In Rickettsia canadensis (strain McKiel), this protein is Glycine--tRNA ligase beta subunit.